The chain runs to 1399 residues: DNA-directed RNA polymerase subunit beta' (1399 aa).

Positions 70, 72, 85, and 88 each coordinate Zn(2+). Mg(2+) is bound by residues aspartate 460, aspartate 462, and aspartate 464. Residues cysteine 814, cysteine 888, cysteine 895, and cysteine 898 each contribute to the Zn(2+) site.

Belongs to the RNA polymerase beta' chain family. As to quaternary structure, the RNAP catalytic core consists of 2 alpha, 1 beta, 1 beta' and 1 omega subunit. When a sigma factor is associated with the core the holoenzyme is formed, which can initiate transcription. The cofactor is Mg(2+). It depends on Zn(2+) as a cofactor.

It catalyses the reaction RNA(n) + a ribonucleoside 5'-triphosphate = RNA(n+1) + diphosphate. DNA-dependent RNA polymerase catalyzes the transcription of DNA into RNA using the four ribonucleoside triphosphates as substrates. This Pseudomonas putida (strain ATCC 47054 / DSM 6125 / CFBP 8728 / NCIMB 11950 / KT2440) protein is DNA-directed RNA polymerase subunit beta'.